A 404-amino-acid chain; its full sequence is Phosphoglycerate kinase (404 aa).

Residues 21 to 23 (DFN), Arg-38, 61 to 64 (HLGR), Arg-126, and Arg-159 contribute to the substrate site. ATP-binding positions include Lys-210, Glu-333, and 360 to 363 (GGDS).

This sequence belongs to the phosphoglycerate kinase family. Monomer.

It localises to the cytoplasm. The enzyme catalyses (2R)-3-phosphoglycerate + ATP = (2R)-3-phospho-glyceroyl phosphate + ADP. It functions in the pathway carbohydrate degradation; glycolysis; pyruvate from D-glyceraldehyde 3-phosphate: step 2/5. The chain is Phosphoglycerate kinase from Acidobacterium capsulatum (strain ATCC 51196 / DSM 11244 / BCRC 80197 / JCM 7670 / NBRC 15755 / NCIMB 13165 / 161).